The chain runs to 344 residues: tRNA N6-adenosine threonylcarbamoyltransferase (344 aa).

The Fe cation site is built by His111 and His115. Substrate-binding positions include 136-140 (LVSGG), Asp169, Gly182, and Asn279. A Fe cation-binding site is contributed by Asp307.

Belongs to the KAE1 / TsaD family. Fe(2+) is required as a cofactor.

It is found in the cytoplasm. It carries out the reaction L-threonylcarbamoyladenylate + adenosine(37) in tRNA = N(6)-L-threonylcarbamoyladenosine(37) in tRNA + AMP + H(+). Its function is as follows. Required for the formation of a threonylcarbamoyl group on adenosine at position 37 (t(6)A37) in tRNAs that read codons beginning with adenine. Is involved in the transfer of the threonylcarbamoyl moiety of threonylcarbamoyl-AMP (TC-AMP) to the N6 group of A37, together with TsaE and TsaB. TsaD likely plays a direct catalytic role in this reaction. The sequence is that of tRNA N6-adenosine threonylcarbamoyltransferase from Mannheimia succiniciproducens (strain KCTC 0769BP / MBEL55E).